The primary structure comprises 248 residues: 2,3-bisphosphoglycerate-dependent phosphoglycerate mutase (248 aa).

Residues 8–15 (RHGESTWN), 21–22 (TG), Arg-60, 87–90 (EKHY), Lys-98, 114–115 (RR), and 183–184 (GN) contribute to the substrate site. The Tele-phosphohistidine intermediate role is filled by His-9. The Proton donor/acceptor role is filled by Glu-87.

This sequence belongs to the phosphoglycerate mutase family. BPG-dependent PGAM subfamily.

The enzyme catalyses (2R)-2-phosphoglycerate = (2R)-3-phosphoglycerate. It functions in the pathway carbohydrate degradation; glycolysis; pyruvate from D-glyceraldehyde 3-phosphate: step 3/5. Functionally, catalyzes the interconversion of 2-phosphoglycerate and 3-phosphoglycerate. This Elusimicrobium minutum (strain Pei191) protein is 2,3-bisphosphoglycerate-dependent phosphoglycerate mutase.